We begin with the raw amino-acid sequence, 418 residues long: UDP-N-acetylglucosamine 1-carboxyvinyltransferase (418 aa).

22–23 (KN) is a binding site for phosphoenolpyruvate. Position 92 (R92) interacts with UDP-N-acetyl-alpha-D-glucosamine. C116 (proton donor) is an active-site residue. C116 bears the 2-(S-cysteinyl)pyruvic acid O-phosphothioketal mark. Residues 121–125 (RPIDL), D305, and L327 contribute to the UDP-N-acetyl-alpha-D-glucosamine site.

It belongs to the EPSP synthase family. MurA subfamily.

Its subcellular location is the cytoplasm. It carries out the reaction phosphoenolpyruvate + UDP-N-acetyl-alpha-D-glucosamine = UDP-N-acetyl-3-O-(1-carboxyvinyl)-alpha-D-glucosamine + phosphate. Its pathway is cell wall biogenesis; peptidoglycan biosynthesis. Functionally, cell wall formation. Adds enolpyruvyl to UDP-N-acetylglucosamine. In Campylobacter jejuni subsp. jejuni serotype O:23/36 (strain 81-176), this protein is UDP-N-acetylglucosamine 1-carboxyvinyltransferase.